Reading from the N-terminus, the 276-residue chain is Probable endonuclease 4 (276 aa).

Residues His67, His107, Glu142, Asp176, His179, His211, Asp224, His226, and Glu256 each contribute to the Zn(2+) site.

Belongs to the AP endonuclease 2 family. Zn(2+) is required as a cofactor.

It carries out the reaction Endonucleolytic cleavage to 5'-phosphooligonucleotide end-products.. In terms of biological role, endonuclease IV plays a role in DNA repair. It cleaves phosphodiester bonds at apurinic or apyrimidinic (AP) sites, generating a 3'-hydroxyl group and a 5'-terminal sugar phosphate. The polypeptide is Probable endonuclease 4 (Methanosphaera stadtmanae (strain ATCC 43021 / DSM 3091 / JCM 11832 / MCB-3)).